Consider the following 130-residue polypeptide: MIAAFIKRHAPQRRLSLWLALPVVALLALVMMPALFRHDSALQIRASRQGASLPDGFYVYQTLSAQGIHIKSITPEQNSLVIRFDSQEQSYAAERVLRELLAQDFDIAHHHNQSATGWINRISFKPQSIG.

At 1-15 (MIAAFIKRHAPQRRL) the chain is on the cytoplasmic side. The helical transmembrane segment at 16-36 (SLWLALPVVALLALVMMPALF) threads the bilayer. Over 37 to 130 (RHDSALQIRA…RISFKPQSIG (94 aa)) the chain is Periplasmic.

Belongs to the MzrA family. As to quaternary structure, interacts with EnvZ.

The protein localises to the cell inner membrane. Functionally, modulates the activity of the EnvZ/OmpR two-component regulatory system, probably by directly modulating EnvZ enzymatic activity and increasing stability of phosphorylated OmpR. This is Modulator protein MzrA from Erwinia tasmaniensis (strain DSM 17950 / CFBP 7177 / CIP 109463 / NCPPB 4357 / Et1/99).